The primary structure comprises 349 residues: DNA replication and repair protein RecF (349 aa).

Residue 30–37 (GKNGSGKT) participates in ATP binding.

The protein belongs to the RecF family.

It localises to the cytoplasm. In terms of biological role, the RecF protein is involved in DNA metabolism; it is required for DNA replication and normal SOS inducibility. RecF binds preferentially to single-stranded, linear DNA. It also seems to bind ATP. The chain is DNA replication and repair protein RecF from Francisella tularensis subsp. holarctica (strain FTNF002-00 / FTA).